Reading from the N-terminus, the 60-residue chain is Metallothionein A (60 aa).

Positions 1–28 are beta; the sequence is MDPCECSKTGKCNCGTSCTCTNCSCKCC. Residues cysteine 4, cysteine 6, cysteine 12, cysteine 14, cysteine 18, cysteine 20, cysteine 23, cysteine 25, cysteine 28, cysteine 32, cysteine 33, cysteine 35, cysteine 36, cysteine 40, cysteine 43, cysteine 47, cysteine 49, cysteine 54, cysteine 58, and cysteine 59 each contribute to the a divalent metal cation site. The segment at 29-60 is alpha; the sequence is KKSCCSCCPSGCSKCASGCVCKGNSCDKSCCQ.

This sequence belongs to the metallothionein superfamily. Type 1 family.

Metallothioneins have a high content of cysteine residues that bind various heavy metals. The protein is Metallothionein A (mta) of Cyprinodon sp. (Pupfish).